The following is a 31-amino-acid chain: Photosystem I reaction center subunit XII (31 aa).

Residues 7 to 26 (QISIILLIALIPAFFSLKLG) traverse the membrane as a helical segment.

This sequence belongs to the PsaM family.

The protein localises to the plastid. It is found in the chloroplast thylakoid membrane. The polypeptide is Photosystem I reaction center subunit XII (Euglena myxocylindracea).